The primary structure comprises 730 residues: Diacylglycerol kinase alpha (730 aa).

EF-hand domains lie at Arg111–Val146 and Glu156–Leu191. Ca(2+) is bound by residues Asp124, Asp126, Asn128, Glu135, Asp169, Asp171, Ser173, Ser175, and Glu180. 2 consecutive Phorbol-ester/DAG-type zinc fingers follow at residues Asn206 to Cys254 and Ser270 to Cys320. The DAGKc domain occupies Ser368 to Pro501. At Lys479 the chain carries N6-acetyllysine.

Belongs to the eukaryotic diacylglycerol kinase family. Monomer.

It localises to the cytoplasm. The protein resides in the cytosol. It catalyses the reaction a 1,2-diacyl-sn-glycerol + ATP = a 1,2-diacyl-sn-glycero-3-phosphate + ADP + H(+). The catalysed reaction is a 1-O-alkyl-sn-glycerol + ATP = a 1-O-alkyl-sn-glycero-3-phosphate + ADP + H(+). It carries out the reaction 1-O-alkyl-2-acyl-sn-glycerol + ATP = 1-O-alkyl-2-acyl-sn-glycero-3-phosphate + ADP + H(+). The enzyme catalyses 1,2-dihexadecanoyl-sn-glycerol + ATP = 1,2-dihexadecanoyl-sn-glycero-3-phosphate + ADP + H(+). It catalyses the reaction 1-hexadecanoyl-2-(9Z-octadecenoyl)-sn-glycerol + ATP = 1-hexadecanoyl-2-(9Z-octadecenoyl)-sn-glycero-3-phosphate + ADP + H(+). The catalysed reaction is 2-(9Z-octadecenoyl)-glycerol + ATP = 2-(9Z-octadecenoyl)-sn-glycero-3-phosphate + ADP + H(+). It carries out the reaction 1,2-di-(9Z-octadecenoyl)-sn-glycerol + ATP = 1,2-di-(9Z-octadecenoyl)-sn-glycero-3-phosphate + ADP + H(+). The enzyme catalyses 1-octadecanoyl-2-(5Z,8Z,11Z,14Z-eicosatetraenoyl)-sn-glycerol + ATP = 1-octadecanoyl-2-(5Z,8Z,11Z,14Z-eicosatetraenoyl)-sn-glycero-3-phosphate + ADP + H(+). It catalyses the reaction 1,2-didecanoyl-sn-glycerol + ATP = 1,2-didecanoyl-sn-glycero-3-phosphate + ADP + H(+). The catalysed reaction is 1-O-hexadecyl-2-acetyl-sn-glycerol + ATP = 1-O-hexadecyl-2-acetyl-sn-glycero-3-phosphate + ADP + H(+). It carries out the reaction 1-O-hexadecyl-2-(5Z,8Z,11Z,14Z-eicosatetraenoyl)-sn-glycerol + ATP = 1-O-hexadecyl-2-(5Z,8Z,11Z,14Z-eicosatetraenoyl)-sn-glycero-3-phosphate + ADP + H(+). The enzyme catalyses 1-O-hexadecyl-2-(9Z-octadecenoyl)-sn-glycerol + ATP = 1-O-hexadecyl-2-(9Z-octadecenoyl)-sn-glycero-3-phosphate + ADP + H(+). It catalyses the reaction 1-O-hexadecyl-sn-glycerol + ATP = 1-O-hexadecyl-sn-glycero-3-phosphate + ADP + H(+). It functions in the pathway lipid metabolism; glycerolipid metabolism. Stimulated by calcium and phosphatidylserine. Diacylglycerol kinase that converts diacylglycerol/DAG into phosphatidic acid/phosphatidate/PA and regulates the respective levels of these two bioactive lipids. Thereby, acts as a central switch between the signaling pathways activated by these second messengers with different cellular targets and opposite effects in numerous biological processes. Also plays an important role in the biosynthesis of complex lipids. Can also phosphorylate 1-alkyl-2-acylglycerol in vitro as efficiently as diacylglycerol provided it contains an arachidonoyl group. Also involved in the production of alkyl-lysophosphatidic acid, another bioactive lipid, through the phosphorylation of 1-alkyl-2-acetyl glycerol. The chain is Diacylglycerol kinase alpha (Dgka) from Mus musculus (Mouse).